The sequence spans 121 residues: uncharacterized protein (121 aa).

Residues 7–121 (IFCKIVRGEV…GGREMSWPPG (115 aa)) enclose the HIT domain. The short motif at 105-109 (HLHLH) is the Histidine triad motif element.

This is an uncharacterized protein from Aquifex aeolicus (strain VF5).